A 374-amino-acid polypeptide reads, in one-letter code: uncharacterized protein (374 aa).

Residues 39–66 (RDVRKHLESRDAKQELIDSLEEAVRDSR) adopt a coiled-coil conformation.

This is an uncharacterized protein from Mycobacterium tuberculosis (strain CDC 1551 / Oshkosh).